The chain runs to 465 residues: Soluble pyridine nucleotide transhydrogenase (465 aa).

Residue 36–45 participates in FAD binding; the sequence is ERYDNVGGGC.

This sequence belongs to the class-I pyridine nucleotide-disulfide oxidoreductase family. FAD serves as cofactor.

The protein localises to the cytoplasm. It catalyses the reaction NAD(+) + NADPH = NADH + NADP(+). Functionally, conversion of NADPH, generated by peripheral catabolic pathways, to NADH, which can enter the respiratory chain for energy generation. This is Soluble pyridine nucleotide transhydrogenase from Sodalis glossinidius (strain morsitans).